The sequence spans 341 residues: MRIAIFIFGILLTSCFSKNGIESGSSKIKISMLVDGVLDDKSFNSSANEALLRLKKDFPENIEKVFSSAVSGVYSSYVSDLDNLKMNGSGLIWLVGYMLADVSLSVSLENPEINYGIIDPIYGDDVQIPKNLIGVVFRIEQGAFLAGYIAAKKSVSSKIGFIGGVKGDIVDAFRYGYEAGAKYANKGIEIVSEYSNSFSDIDIARVMANKMYSKGIDIIHFAAGLAGVGVIEAAKELGDGYYVIGADQDQSHLAPKNFITSVIKNVGDALYLITSESLKNDNVWEGGKIVQMGLRDGVVGLSNANEFEYIKDLERKIINKEIIVPCNQEGYEIFIKQILKL.

A signal peptide spans 1–14 (MRIAIFIFGILLTS). Residue Cys15 is the site of N-palmitoyl cysteine attachment. The S-diacylglycerol cysteine moiety is linked to residue Cys15.

The protein belongs to the BMP lipoprotein family. In terms of assembly, monomer.

It localises to the cell inner membrane. May be part of an ABC-type nucleoside uptake system involved in the purine salvage pathway. In Borreliella afzelii (strain PKo) (Borrelia afzelii), this protein is Basic membrane protein B (bmpB).